Consider the following 174-residue polypeptide: Alpha-crystallin B chain (174 aa).

M1 bears the N-acetylmethionine mark. Residues 55–163 (RMPSWLETGL…PERSIPITRE (109 aa)) form the sHSP domain. The Zn(2+) site is built by H82, H103, E105, and H110. A disordered region spans residues 148-174 (RKQSDVPERSIPITREEKPAIAGAQRK). Residues 149–166 (KQSDVPERSIPITREEKP) are compositionally biased toward basic and acidic residues.

It belongs to the small heat shock protein (HSP20) family. Heteromer composed of three CRYAA and one CRYAB subunits. Aggregates with homologous proteins, including the small heat shock protein HSPB1, to form large heteromeric complexes. Inter-subunit bridging via zinc ions enhances stability, which is crucial as there is no protein turn over in the lens. Lens as well as other tissues.

Its function is as follows. May contribute to the transparency and refractive index of the lens. The chain is Alpha-crystallin B chain (CRYAB) from Anas platyrhynchos (Mallard).